Reading from the N-terminus, the 267-residue chain is Phosphatidylcholine synthase (267 aa).

Residues 1–42 (MILWRIVRPGAAMAYVQTGLVLIAEAMDTQQDSLKPRPAMRA) are Cytoplasmic-facing. Residues 43–63 (AAFSVHVFTAFGAAIALLAML) form a helical membrane-spanning segment. At 64-69 (EAVREH) the chain is on the periplasmic side. Residues 70-90 (WAAMFQWLGVALIIDAIDGPI) traverse the membrane as a helical segment. Over 91–102 (ARRLDVKNVQPN) the chain is Cytoplasmic. The chain crosses the membrane as a helical span at residues 103–123 (WSGDVLDLVVDFVTYVFVPAY). Position 124 (alanine 124) is a topological domain, periplasmic. The chain crosses the membrane as a helical span at residues 125 to 145 (IVASGLLLPVAAPLLGVAIIV). Residues 146-162 (TSALYFADLRMKADDNH) are Cytoplasmic-facing. Residues 163–183 (FRGFPALWNAAAFYLFLLHWP) form a helical membrane-spanning segment. Residue proline 184 is a topological domain, periplasmic. A helical membrane pass occupies residues 185–205 (LWSTLLVAALVVLTFVPFHVL). Residues 206–215 (HPVRVVRLRW) lie on the Cytoplasmic side of the membrane. The helical transmembrane segment at 216–236 (LTMSLIGIWAVLSLYTLDMDF) threads the bilayer. Over 237–239 (RVG) the chain is Periplasmic. A helical membrane pass occupies residues 240-260 (PGVTLALCAIALWISFSDALI). Topologically, residues 261-267 (RFARSFA) are cytoplasmic.

It belongs to the CDP-alcohol phosphatidyltransferase class-I family. Mn(2+) is required as a cofactor.

The protein localises to the cell inner membrane. The catalysed reaction is a CDP-1,2-diacyl-sn-glycerol + choline = a 1,2-diacyl-sn-glycero-3-phosphocholine + CMP + H(+). In terms of biological role, condenses choline with CDP-diglyceride to produce phosphatidylcholine and CMP. In Bradyrhizobium diazoefficiens (strain JCM 10833 / BCRC 13528 / IAM 13628 / NBRC 14792 / USDA 110), this protein is Phosphatidylcholine synthase.